A 501-amino-acid chain; its full sequence is MSEQTQELDLNGEMLVRREKLAALRAKGNPFPNTFRRDALAQDLHANYDALEGEALKAQEVEVKVAGRIMTRRAMGKATFITLQDMSGRIQLYVARDNLPEGIYADDVGQWDLGDIIGVKGTLFKTKTNELTVRCTEVQLLTKALRPLPDKFHGLSDQETRYRQRYLDLIANEDSRRTFIIRSKVIAGIREYFLSKGFMEVETPMLQIIPGGASARPFVTHHNALDVDMYLRIAPELYLKRLVVGGFERVFELNRNFRNEGVSVRHNPEFTMLEYYQAYADYHDLMDNTEELLRKLAMDILGTTIVPYGELEFDFGKPFERITMHDAILKYGAEKGIVKEDLYDFDRAVAVAKKLGIEVQKSWGLGSLVNVIFEEVAEHHLIQPTFLMAHPAEISPLARRNDENPEVTDRFELFIGGREIGNGFSELNDAEDQNERFDAQVAAKEAGDDEAMFKDEDFVTALEHGLPPTAGEGLGIDRLAMLFANAASIRDVILFPAMKQK.

Mg(2+) is bound by residues Glu412 and Glu419.

Belongs to the class-II aminoacyl-tRNA synthetase family. In terms of assembly, homodimer. Mg(2+) serves as cofactor.

The protein localises to the cytoplasm. The enzyme catalyses tRNA(Lys) + L-lysine + ATP = L-lysyl-tRNA(Lys) + AMP + diphosphate. This chain is Lysine--tRNA ligase (lysS), found in Pasteurella multocida (strain Pm70).